The chain runs to 354 residues: UDP-N-acetylglucosamine--N-acetylmuramyl-(pentapeptide) pyrophosphoryl-undecaprenol N-acetylglucosamine transferase (354 aa).

Residues 12 to 14, Asn124, Arg163, Ser187, Ile240, and Gln285 contribute to the UDP-N-acetyl-alpha-D-glucosamine site; that span reads TGG.

Belongs to the glycosyltransferase 28 family. MurG subfamily.

Its subcellular location is the cell inner membrane. It catalyses the reaction di-trans,octa-cis-undecaprenyl diphospho-N-acetyl-alpha-D-muramoyl-L-alanyl-D-glutamyl-meso-2,6-diaminopimeloyl-D-alanyl-D-alanine + UDP-N-acetyl-alpha-D-glucosamine = di-trans,octa-cis-undecaprenyl diphospho-[N-acetyl-alpha-D-glucosaminyl-(1-&gt;4)]-N-acetyl-alpha-D-muramoyl-L-alanyl-D-glutamyl-meso-2,6-diaminopimeloyl-D-alanyl-D-alanine + UDP + H(+). It participates in cell wall biogenesis; peptidoglycan biosynthesis. Cell wall formation. Catalyzes the transfer of a GlcNAc subunit on undecaprenyl-pyrophosphoryl-MurNAc-pentapeptide (lipid intermediate I) to form undecaprenyl-pyrophosphoryl-MurNAc-(pentapeptide)GlcNAc (lipid intermediate II). This chain is UDP-N-acetylglucosamine--N-acetylmuramyl-(pentapeptide) pyrophosphoryl-undecaprenol N-acetylglucosamine transferase, found in Methylococcus capsulatus (strain ATCC 33009 / NCIMB 11132 / Bath).